Reading from the N-terminus, the 1108-residue chain is Unconventional myosin-Ie (1108 aa).

A Myosin motor domain is found at 19-692; the sequence is SGVDDMVLLS…SLFLLEEMRE (674 aa). Position 112–119 (112–119) interacts with ATP; sequence GESGAGKT. Residues 581–591 form an actin-binding region; sequence PHYIRCIKPNE. Positions 695–724 constitute an IQ domain; that stretch reads YDGYARVIQKSWRKFVARKKYVQMREEASD. A TH1 domain is found at 730–922; that stretch reads KERRRNSINR…NKVLQVSIGP (193 aa). A disordered region spans residues 919–966; the sequence is SIGPGLPKNSRPTRRNTTQNTGYSSGTQNANYPVRAAPPPPGYHQNGV. A compositionally biased stretch (polar residues) spans 933–949; it reads RNTTQNTGYSSGTQNAN. Serine 980 and serine 1002 each carry phosphoserine. The disordered stretch occupies residues 993-1053; sequence ARPPLPRQQS…KPQPKPKPQV (61 aa). Polar residues predominate over residues 999 to 1013; the sequence is RQQSTSSDRVSQTPE. A compositionally biased stretch (pro residues) spans 1035-1052; that stretch reads RPPPAGGRPKPQPKPKPQ. The region spanning 1051 to 1108 is the SH3 domain; that stretch reads PQVPQCKALYAYDAQDTDELSFNANDIIDIIKEDPSGWWTGRLRGKQGLFPNNYVTKI.

This sequence belongs to the TRAFAC class myosin-kinesin ATPase superfamily. Myosin family. As to quaternary structure, interacts with CALM and F-actin. Interacts (via SH3 domain) with SYNJ1, DNM1 and DNM2. Interacts with ARL14EP. Interacts with CARMIL1. In terms of tissue distribution, expressed in the immune system. In the kidney, predominantly expressed in the glomerulus, including podocytes.

It localises to the cytoplasm. Its subcellular location is the cytoskeleton. It is found in the cytoplasmic vesicle. The protein localises to the clathrin-coated vesicle. The protein resides in the cell junction. In terms of biological role, actin-based motor molecule with ATPase activity. Unconventional myosins serve in intracellular movements. Their highly divergent tails bind to membranous compartments, which are then moved relative to actin filaments. Binds to membranes containing anionic phospholipids via its tail domain. Involved in clathrin-mediated endocytosis and intracellular movement of clathrin-coated vesicles. Required for normal morphology of the glomerular basement membrane, normal development of foot processes by kidney podocytes and normal kidney function. In dendritic cells, may control the movement of class II-containing cytoplasmic vesicles along the actin cytoskeleton by connecting them with the actin network via ARL14EP and ARL14. This is Unconventional myosin-Ie (MYO1E) from Homo sapiens (Human).